The chain runs to 365 residues: Caffeic acid 3-O-methyltransferase 1 (365 aa).

130–136 contacts substrate; that stretch reads MNQDKVL. The interval 162 to 180 is substrate binding; the sequence is AFEYHGTDPRFNKVFNKGM. S-adenosyl-L-methionine-binding residues include G208, D231, D251, M252, and K265. H269 serves as the catalytic Proton acceptor.

The protein belongs to the class I-like SAM-binding methyltransferase superfamily. Cation-independent O-methyltransferase family. COMT subfamily. Homodimer.

The enzyme catalyses (E)-caffeate + S-adenosyl-L-methionine = (E)-ferulate + S-adenosyl-L-homocysteine + H(+). The protein operates within aromatic compound metabolism; phenylpropanoid biosynthesis. Catalyzes the conversion of caffeic acid to ferulic acid and of 5-hydroxyferulic acid to sinapic acid. The resulting products may subsequently be converted to the corresponding alcohols that are incorporated into lignins. The chain is Caffeic acid 3-O-methyltransferase 1 (HOMT1) from Populus kitakamiensis (Aspen).